A 126-amino-acid chain; its full sequence is Glycerol dehydrogenase small subunit (126 aa).

Helical transmembrane passes span 13–33 (WLTLVLGVVIILVGLFFVIAG), 41–61 (GSVYYVICGIPLVAGGVFMLM), 67–87 (AFLYLGALAYTWVWSLWEVGF), and 92–112 (LLPRDFGPTLLGILVALTIPV).

The protein localises to the cell membrane. It catalyses the reaction glycerol + A = dihydroxyacetone + AH2. Its function is as follows. Catalyzes the oxidation of glycerol to glycerone. Also acts, more slowly, on a number of other polyols including D-sorbitol, D-arabinitol, D-mannitol, meso-erythritol, adonitol and propylene glycol. This Gluconobacter oxydans (strain 621H) (Gluconobacter suboxydans) protein is Glycerol dehydrogenase small subunit (sldB).